We begin with the raw amino-acid sequence, 269 residues long: C-type lectin domain family 2 member G (269 aa).

The Cytoplasmic portion of the chain corresponds to 1-107 (MNITRASLPM…SPESSAKLYC (107 aa)). The chain crosses the membrane as a helical; Signal-anchor for type II membrane protein span at residues 108–128 (CCGVIMVLTVAVVALSVALPA). Topologically, residues 129–269 (TKTEQILINK…SLHCPTPVPV (141 aa)) are extracellular. Residues 150–254 (VGNKCFYFSE…HYIPRIWICS (105 aa)) form the C-type lectin domain. Asparagine 163 carries N-linked (GlcNAc...) asparagine glycosylation. Cysteine 171 and cysteine 253 form a disulfide bridge.

Detected in vagina, eye, tongue, stomach and spleen.

The protein localises to the cell membrane. Inhibits osteoclast formation. In Mus musculus (Mouse), this protein is C-type lectin domain family 2 member G (Clec2g).